We begin with the raw amino-acid sequence, 274 residues long: Insulin-like growth factor-binding protein-like 1 (274 aa).

A signal peptide spans 1-21; sequence MPRSPGLFLLLLVLQPLPALG. The region spanning 30–105 is the IGFBP N-terminal domain; that stretch reads RNPECGPCRP…PEGTGLCVCA (76 aa). Disulfide bonds link cysteine 34–cysteine 59, cysteine 37–cysteine 61, cysteine 42–cysteine 62, cysteine 48–cysteine 65, cysteine 73–cysteine 87, cysteine 81–cysteine 102, and cysteine 111–cysteine 147. A Kazal-like domain is found at 91 to 149; sequence AAGAAPEGTGLCVCAQRGSVCGSDGRSYPSVCALRLRARQAPRALPGHLHKARDGPCEF. The Ig-like C2-type domain maps to 151-255; it reads PVVITPPQSV…GEAQSHGTVT (105 aa). The N-linked (GlcNAc...) asparagine glycan is linked to asparagine 162. Cysteine 172 and cysteine 239 are oxidised to a cystine.

The protein localises to the secreted. Functionally, IGF-binding proteins prolong the half-life of IGFs and have been shown to either inhibit or stimulate the growth promoting effects of the IGFs in cell culture. They alter the interaction of IGFs with their cell surface receptors. This Bos taurus (Bovine) protein is Insulin-like growth factor-binding protein-like 1 (IGFBPL1).